A 382-amino-acid chain; its full sequence is 8-amino-7-oxononanoate synthase (382 aa).

Arg-26 provides a ligand contact to substrate. Gly-104 to Tyr-105 contacts pyridoxal 5'-phosphate. His-129 contributes to the substrate binding site. Pyridoxal 5'-phosphate is bound by residues Ser-175, Asp-200–His-203, and Thr-232–Lys-235. Lys-235 is subject to N6-(pyridoxal phosphate)lysine. Substrate is bound at residue Thr-345.

Belongs to the class-II pyridoxal-phosphate-dependent aminotransferase family. BioF subfamily. In terms of assembly, homodimer. Pyridoxal 5'-phosphate is required as a cofactor.

It catalyses the reaction 6-carboxyhexanoyl-[ACP] + L-alanine + H(+) = (8S)-8-amino-7-oxononanoate + holo-[ACP] + CO2. The protein operates within cofactor biosynthesis; biotin biosynthesis. Catalyzes the decarboxylative condensation of pimeloyl-[acyl-carrier protein] and L-alanine to produce 8-amino-7-oxononanoate (AON), [acyl-carrier protein], and carbon dioxide. This is 8-amino-7-oxononanoate synthase from Mycobacterium sp. (strain KMS).